A 338-amino-acid polypeptide reads, in one-letter code: D-erythrose-4-phosphate dehydrogenase (338 aa).

NAD(+) is bound at residue 11–12 (RI). Residues 153–155 (SCT), R199, 212–213 (TK), and R235 each bind substrate. C154 functions as the Nucleophile in the catalytic mechanism. N317 contributes to the NAD(+) binding site.

It belongs to the glyceraldehyde-3-phosphate dehydrogenase family. Epd subfamily. Homotetramer.

The protein localises to the cytoplasm. The catalysed reaction is D-erythrose 4-phosphate + NAD(+) + H2O = 4-phospho-D-erythronate + NADH + 2 H(+). The protein operates within cofactor biosynthesis; pyridoxine 5'-phosphate biosynthesis; pyridoxine 5'-phosphate from D-erythrose 4-phosphate: step 1/5. In terms of biological role, catalyzes the NAD-dependent conversion of D-erythrose 4-phosphate to 4-phosphoerythronate. The chain is D-erythrose-4-phosphate dehydrogenase from Shewanella putrefaciens (strain CN-32 / ATCC BAA-453).